Consider the following 182-residue polypeptide: Ribosome-recycling factor (182 aa).

Belongs to the RRF family.

It is found in the cytoplasm. In terms of biological role, responsible for the release of ribosomes from messenger RNA at the termination of protein biosynthesis. May increase the efficiency of translation by recycling ribosomes from one round of translation to another. The chain is Ribosome-recycling factor from Prochlorococcus marinus subsp. pastoris (strain CCMP1986 / NIES-2087 / MED4).